The following is a 519-amino-acid chain: Baeyer-Villiger monooxygenase (519 aa).

Residues E41, 49-52 (TWRD), D61, Y67, and V110 contribute to the FAD site. Residue 59-61 (ACD) coordinates NADP(+). Residues 183-189 (TGASAIQ), 206-207 (RT), and 292-293 (KR) contribute to the NADP(+) site. M399 serves as a coordination point for FAD. The disordered stretch occupies residues 499 to 519 (GAKAAEADTGADTGADAEVSA).

This sequence belongs to the FAD-binding monooxygenase family. Requires FAD as cofactor.

Its function is as follows. Catalyzes a Baeyer-Villiger oxidation reaction, i.e. the insertion of an oxygen atom into a carbon-carbon bond adjacent to a carbonyl, which converts ketones to esters or lactones using NADPH and/or NADH as an electron donor. Thus, can convert bicyclo[3.2.0]hept-2-en-6-one into the oxidative lactone products 2-oxabicyclo[3.3.0]oct-6-en-3-one and 3-oxabicyclo[3.3.0]oct-6-en-2-one. Is also able to catalyze the sulfoxidation of methyl phenyl sulfide (thioanisole). The chain is Baeyer-Villiger monooxygenase from Streptomyces coelicolor (strain ATCC BAA-471 / A3(2) / M145).